The primary structure comprises 274 residues: Rhamnulose-1-phosphate aldolase (274 aa).

E117 is an active-site residue. The Zn(2+) site is built by H141, H143, and H212.

This sequence belongs to the aldolase class II family. RhaD subfamily. In terms of assembly, homotetramer. The cofactor is Zn(2+).

It is found in the cytoplasm. The enzyme catalyses L-rhamnulose 1-phosphate = (S)-lactaldehyde + dihydroxyacetone phosphate. The protein operates within carbohydrate degradation; L-rhamnose degradation; glycerone phosphate from L-rhamnose: step 3/3. In terms of biological role, catalyzes the reversible cleavage of L-rhamnulose-1-phosphate to dihydroxyacetone phosphate (DHAP) and L-lactaldehyde. The protein is Rhamnulose-1-phosphate aldolase of Escherichia coli (strain SE11).